We begin with the raw amino-acid sequence, 612 residues long: U-box domain-containing protein 11 (612 aa).

Residues 127 to 196 adopt a coiled-coil conformation; sequence DEVGEQVELA…LHFGEEEEKQ (70 aa). The U-box domain maps to 240–314; sequence TIPVDFLCPV…SRWCAEHNIE (75 aa). ARM repeat units lie at residues 363–402, 404–443, 445–484, 486–526, and 528–567; these read TDNRILIAEAGAIPVLVNLLTSEDVATQENAITCVLNLSI, ENNKELIMFAGAVTSIVQVLRAGTMEARENAAATLFSLSL, DENKIIIGGSGAIPALVDLLENGTPRGKKDAATALFNLCI, HGNK…VLAN, and QDAKSAIVKANTLPALIGILQTDQTRNRENAAAILLSLCK.

The enzyme catalyses S-ubiquitinyl-[E2 ubiquitin-conjugating enzyme]-L-cysteine + [acceptor protein]-L-lysine = [E2 ubiquitin-conjugating enzyme]-L-cysteine + N(6)-ubiquitinyl-[acceptor protein]-L-lysine.. It functions in the pathway protein modification; protein ubiquitination. In terms of biological role, functions as an E3 ubiquitin ligase. This Arabidopsis thaliana (Mouse-ear cress) protein is U-box domain-containing protein 11 (PUB11).